Reading from the N-terminus, the 51-residue chain is Sperm protamine P1 (51 aa).

Intrachain disulfides connect Cys7–Cys15 and Cys40–Cys48.

Belongs to the protamine P1 family. Cross-linked by interchain disulfide bonds around the DNA-helix. Phosphorylated by SRPK1. In terms of tissue distribution, testis.

The protein localises to the nucleus. The protein resides in the chromosome. Its function is as follows. Protamines substitute for histones in the chromatin of sperm during the haploid phase of spermatogenesis. They compact sperm DNA into a highly condensed, stable and inactive complex. In Bos taurus (Bovine), this protein is Sperm protamine P1 (PRM1).